A 611-amino-acid polypeptide reads, in one-letter code: MAU2 chromatid cohesion factor homolog (611 aa).

TPR repeat units lie at residues 11-46, 91-124, 131-164, 371-404, and 490-523; these read YAGL…NPPP, FEAS…TSGE, FRLF…AEQC, PILH…ADNP, and ACSL…SGKI. The segment at 581–611 is disordered; that stretch reads WTGAVSPTKSSTIPPQQSFQTWSQPGPSRLS. Residues 585-611 are compositionally biased toward polar residues; sequence VSPTKSSTIPPQQSFQTWSQPGPSRLS.

It belongs to the SCC4/mau-2 family. Component of the cohesin loading complex.

It is found in the nucleus. It localises to the nucleoplasm. Required for association of the cohesin complex with chromatin during interphase. Plays a role in sister chromatid cohesion and normal progression through prometaphase. The sequence is that of MAU2 chromatid cohesion factor homolog from Nematostella vectensis (Starlet sea anemone).